Here is a 354-residue protein sequence, read N- to C-terminus: Thiamine thiazole synthase (354 aa).

Substrate-binding positions include Ala83, 104–105 (EA), Gly112, and Val177. Cys210 carries the post-translational modification 2,3-didehydroalanine (Cys). Residues Asp212, His227, Met305, and 315–317 (RMG) each bind substrate.

This sequence belongs to the THI4 family. In terms of assembly, homooctamer. Fe cation serves as cofactor. During the catalytic reaction, a sulfide is transferred from Cys-210 to a reaction intermediate, generating a dehydroalanine residue.

The protein localises to the cytoplasm. It localises to the nucleus. The catalysed reaction is [ADP-thiazole synthase]-L-cysteine + glycine + NAD(+) = [ADP-thiazole synthase]-dehydroalanine + ADP-5-ethyl-4-methylthiazole-2-carboxylate + nicotinamide + 3 H2O + 2 H(+). In terms of biological role, involved in biosynthesis of the thiamine precursor thiazole. Catalyzes the conversion of NAD and glycine to adenosine diphosphate 5-(2-hydroxyethyl)-4-methylthiazole-2-carboxylic acid (ADT), an adenylated thiazole intermediate. The reaction includes an iron-dependent sulfide transfer from a conserved cysteine residue of the protein to a thiazole intermediate. The enzyme can only undergo a single turnover, which suggests it is a suicide enzyme. May have additional roles in adaptation to various stress conditions and in DNA damage tolerance. The sequence is that of Thiamine thiazole synthase from Candida albicans (strain SC5314 / ATCC MYA-2876) (Yeast).